Here is a 205-residue protein sequence, read N- to C-terminus: Thiamine-phosphate synthase (205 aa).

4-amino-2-methyl-5-(diphosphooxymethyl)pyrimidine contacts are provided by residues 37–41 (QVREK) and asparagine 69. Residues aspartate 70 and aspartate 89 each coordinate Mg(2+). Position 108 (serine 108) interacts with 4-amino-2-methyl-5-(diphosphooxymethyl)pyrimidine. Residue 134-136 (TGS) participates in 2-[(2R,5Z)-2-carboxy-4-methylthiazol-5(2H)-ylidene]ethyl phosphate binding. Lysine 137 provides a ligand contact to 4-amino-2-methyl-5-(diphosphooxymethyl)pyrimidine. Residues glycine 165 and 185-186 (IS) each bind 2-[(2R,5Z)-2-carboxy-4-methylthiazol-5(2H)-ylidene]ethyl phosphate.

This sequence belongs to the thiamine-phosphate synthase family. Mg(2+) is required as a cofactor.

It catalyses the reaction 2-[(2R,5Z)-2-carboxy-4-methylthiazol-5(2H)-ylidene]ethyl phosphate + 4-amino-2-methyl-5-(diphosphooxymethyl)pyrimidine + 2 H(+) = thiamine phosphate + CO2 + diphosphate. The catalysed reaction is 2-(2-carboxy-4-methylthiazol-5-yl)ethyl phosphate + 4-amino-2-methyl-5-(diphosphooxymethyl)pyrimidine + 2 H(+) = thiamine phosphate + CO2 + diphosphate. The enzyme catalyses 4-methyl-5-(2-phosphooxyethyl)-thiazole + 4-amino-2-methyl-5-(diphosphooxymethyl)pyrimidine + H(+) = thiamine phosphate + diphosphate. The protein operates within cofactor biosynthesis; thiamine diphosphate biosynthesis; thiamine phosphate from 4-amino-2-methyl-5-diphosphomethylpyrimidine and 4-methyl-5-(2-phosphoethyl)-thiazole: step 1/1. Functionally, condenses 4-methyl-5-(beta-hydroxyethyl)thiazole monophosphate (THZ-P) and 2-methyl-4-amino-5-hydroxymethyl pyrimidine pyrophosphate (HMP-PP) to form thiamine monophosphate (TMP). The sequence is that of Thiamine-phosphate synthase from Clostridium botulinum (strain Langeland / NCTC 10281 / Type F).